Reading from the N-terminus, the 101-residue chain is NAD(P)H-quinone oxidoreductase subunit 4L, chloroplastic (101 aa).

3 helical membrane passes run 2 to 22, 32 to 52, and 61 to 81; these read MLEH…YGLI, MCLE…SDFF, and IFSI…PAIV.

The protein belongs to the complex I subunit 4L family. In terms of assembly, NDH is composed of at least 16 different subunits, 5 of which are encoded in the nucleus.

It localises to the plastid. Its subcellular location is the chloroplast thylakoid membrane. It carries out the reaction a plastoquinone + NADH + (n+1) H(+)(in) = a plastoquinol + NAD(+) + n H(+)(out). It catalyses the reaction a plastoquinone + NADPH + (n+1) H(+)(in) = a plastoquinol + NADP(+) + n H(+)(out). In terms of biological role, NDH shuttles electrons from NAD(P)H:plastoquinone, via FMN and iron-sulfur (Fe-S) centers, to quinones in the photosynthetic chain and possibly in a chloroplast respiratory chain. The immediate electron acceptor for the enzyme in this species is believed to be plastoquinone. Couples the redox reaction to proton translocation, and thus conserves the redox energy in a proton gradient. The sequence is that of NAD(P)H-quinone oxidoreductase subunit 4L, chloroplastic from Fagopyrum esculentum subsp. ancestrale (Wild buckwheat).